Reading from the N-terminus, the 407-residue chain is Putative glucose/galactose transporter (407 aa).

The next 12 membrane-spanning stretches (helical) occupy residues 11–31 (GSLT…DILI), 47–67 (LIQF…GNVI), 70–90 (IGYP…CALF), 96–116 (FGSY…IVCL), 139–159 (VQAF…LLIF), 180–200 (VQMP…IMYL), 225–245 (FVFG…IGSF), 263–283 (HYLV…SVLM), 300–320 (IVLI…ALTF), 321–341 (VGFF…LNLG), 349–369 (GVIS…GAVT), and 378–398 (NLLY…FFAL).

This sequence belongs to the major facilitator superfamily. FHS transporter (TC 2.A.1.7) family.

It is found in the cell inner membrane. Its function is as follows. Intake of glucose and galactose. The polypeptide is Putative glucose/galactose transporter (gluP) (Helicobacter pylori (strain ATCC 700392 / 26695) (Campylobacter pylori)).